The sequence spans 172 residues: Adenine phosphoribosyltransferase (172 aa).

The protein belongs to the purine/pyrimidine phosphoribosyltransferase family. In terms of assembly, homodimer.

It localises to the cytoplasm. It carries out the reaction AMP + diphosphate = 5-phospho-alpha-D-ribose 1-diphosphate + adenine. The protein operates within purine metabolism; AMP biosynthesis via salvage pathway; AMP from adenine: step 1/1. Catalyzes a salvage reaction resulting in the formation of AMP, that is energically less costly than de novo synthesis. This chain is Adenine phosphoribosyltransferase, found in Hydrogenovibrio crunogenus (strain DSM 25203 / XCL-2) (Thiomicrospira crunogena).